The chain runs to 465 residues: Clusterin-like protein 1 (465 aa).

A signal peptide spans Met-1 to Cys-20. Residues Leu-62–Val-107 are a coiled coil. 5 disulfides stabilise this stretch: Cys-105-Cys-333, Cys-116-Cys-325, Cys-119-Cys-322, Cys-124-Cys-315, and Cys-131-Cys-305. Residues Asn-196 and Asn-257 are each glycosylated (N-linked (GlcNAc...) asparagine). The disordered stretch occupies residues Leu-280–Arg-300. N-linked (GlcNAc...) asparagine glycosylation is found at Asn-311, Asn-351, Asn-412, and Asn-430.

The protein belongs to the clusterin family.

The protein localises to the secreted. This Bos taurus (Bovine) protein is Clusterin-like protein 1.